The sequence spans 477 residues: 3-isopropylmalate dehydratase large subunit (477 aa).

Cys352, Cys413, and Cys416 together coordinate [4Fe-4S] cluster.

This sequence belongs to the aconitase/IPM isomerase family. LeuC type 1 subfamily. As to quaternary structure, heterodimer of LeuC and LeuD. [4Fe-4S] cluster is required as a cofactor.

The enzyme catalyses (2R,3S)-3-isopropylmalate = (2S)-2-isopropylmalate. It participates in amino-acid biosynthesis; L-leucine biosynthesis; L-leucine from 3-methyl-2-oxobutanoate: step 2/4. Functionally, catalyzes the isomerization between 2-isopropylmalate and 3-isopropylmalate, via the formation of 2-isopropylmaleate. This Pseudomonas entomophila (strain L48) protein is 3-isopropylmalate dehydratase large subunit.